The following is a 349-amino-acid chain: Phosphoribosylformylglycinamidine cyclo-ligase (349 aa).

Belongs to the AIR synthase family.

It is found in the cytoplasm. It carries out the reaction 2-formamido-N(1)-(5-O-phospho-beta-D-ribosyl)acetamidine + ATP = 5-amino-1-(5-phospho-beta-D-ribosyl)imidazole + ADP + phosphate + H(+). Its pathway is purine metabolism; IMP biosynthesis via de novo pathway; 5-amino-1-(5-phospho-D-ribosyl)imidazole from N(2)-formyl-N(1)-(5-phospho-D-ribosyl)glycinamide: step 2/2. This is Phosphoribosylformylglycinamidine cyclo-ligase from Psychrobacter arcticus (strain DSM 17307 / VKM B-2377 / 273-4).